We begin with the raw amino-acid sequence, 208 residues long: Holliday junction branch migration complex subunit RuvA (208 aa).

The interval 1–63 (MIGMLTGRVE…QDSVTLYGFL (63 aa)) is domain I. A domain II region spans residues 64–142 (DRDSKRVFLQ…LNQSDDASAG (79 aa)). Residues 143–151 (NAPYQPTVD) are flexible linker. Positions 151–208 (DAGVEQVVEGLVSLGWRQQDAQRAVNEACAENDVPMPLASDDAPRVLRLALARMDRGR) are domain III.

Belongs to the RuvA family. As to quaternary structure, homotetramer. Forms an RuvA(8)-RuvB(12)-Holliday junction (HJ) complex. HJ DNA is sandwiched between 2 RuvA tetramers; dsDNA enters through RuvA and exits via RuvB. An RuvB hexamer assembles on each DNA strand where it exits the tetramer. Each RuvB hexamer is contacted by two RuvA subunits (via domain III) on 2 adjacent RuvB subunits; this complex drives branch migration. In the full resolvosome a probable DNA-RuvA(4)-RuvB(12)-RuvC(2) complex forms which resolves the HJ.

Its subcellular location is the cytoplasm. Its function is as follows. The RuvA-RuvB-RuvC complex processes Holliday junction (HJ) DNA during genetic recombination and DNA repair, while the RuvA-RuvB complex plays an important role in the rescue of blocked DNA replication forks via replication fork reversal (RFR). RuvA specifically binds to HJ cruciform DNA, conferring on it an open structure. The RuvB hexamer acts as an ATP-dependent pump, pulling dsDNA into and through the RuvAB complex. HJ branch migration allows RuvC to scan DNA until it finds its consensus sequence, where it cleaves and resolves the cruciform DNA. The chain is Holliday junction branch migration complex subunit RuvA from Bifidobacterium longum subsp. infantis (strain ATCC 15697 / DSM 20088 / JCM 1222 / NCTC 11817 / S12).